Reading from the N-terminus, the 102-residue chain is UPF0251 protein ASA_1331 (102 aa).

The protein belongs to the UPF0251 family.

In Aeromonas salmonicida (strain A449), this protein is UPF0251 protein ASA_1331.